We begin with the raw amino-acid sequence, 215 residues long: Vesicle-trafficking protein SEC22b-A (215 aa).

The Cytoplasmic segment spans residues 1–190 (MVLQTMIVRV…RSDAKYLNTR (190 aa)). A Longin domain is found at 6 to 119 (MIVRVADSLP…YSFIEFDTYI (114 aa)). The region spanning 134-194 (NLGNINSELH…KYLNTRSTYA (61 aa)) is the v-SNARE coiled-coil homology domain. A helical transmembrane segment spans residues 191-213 (STYAKVAAGAVIIITLIIYVRFW). At 214-215 (WL) the chain is on the lumenal side.

Belongs to the synaptobrevin family. Component of 2 distinct SNARE complexes.

The protein localises to the endoplasmic reticulum membrane. The protein resides in the endoplasmic reticulum-Golgi intermediate compartment membrane. It localises to the golgi apparatus. Its subcellular location is the cis-Golgi network membrane. It is found in the trans-Golgi network membrane. The protein localises to the melanosome. Functionally, SNARE involved in targeting and fusion of ER-derived transport vesicles with the Golgi complex as well as Golgi-derived retrograde transport vesicles with the ER. The protein is Vesicle-trafficking protein SEC22b-A of Danio rerio (Zebrafish).